The primary structure comprises 390 residues: Transforming growth factor beta-1 proprotein (390 aa).

Residues 1-29 form the signal peptide; sequence MPPSGLRLLPLLLPLLRLLVLTPGRPAAG. A straightjacket domain region spans residues 30 to 74; sequence LSTCKTIDMELVKRKRIEAIRGQILSKLRLSSPPSQGEVPPVPLP. The segment at 75–271 is arm domain; that stretch reads EAVLALYNST…ATPLERAQHL (197 aa). 3 N-linked (GlcNAc...) asparagine glycosylation sites follow: Asn82, Asn136, and Asn176. A bowtie tail region spans residues 226-252; sequence DSKDNTLQVDINGFSSSRRGDLATIHG. The Cell attachment site signature appears at 244 to 246; that stretch reads RGD. 4 cysteine pairs are disulfide-bonded: Cys285/Cys294, Cys293/Cys356, Cys322/Cys387, and Cys326/Cys389.

It belongs to the TGF-beta family. Homodimer; disulfide-linked. Interacts with the serine proteases, HTRA1 and HTRA3: the interaction with either inhibits TGFB1-mediated signaling and the HTRA protease activity is required for this inhibition. May interact with THSD4; this interaction may lead to sequestration by FBN1 microfibril assembly and attenuation of TGFB signaling. Interacts with CD109, DPT and ASPN. Interacts with EFEMP2. Interacts with TSKU; the interaction contributes to regulation of the hair cycle. Interacts with TGFBR3. In terms of assembly, homodimer; disulfide-linked. Interacts with transforming growth factor beta-1 (TGF-beta-1) chain; interaction is non-covalent and maintains TGF-beta-1 in a latent state; each latency-associated peptide (LAP) monomer interacts with TGF-beta-1 in the other monomer. Interacts with LTBP1; leading to regulation of TGF-beta-1 activation. Interacts with LRRC32/GARP; leading to regulation of TGF-beta-1 activation on the surface of activated regulatory T-cells (Tregs). Interacts with LRRC33/NRROS; leading to regulation of TGF-beta-1 activation in macrophages and microglia. Interacts (via cell attachment site) with integrins ITGAV and ITGB6 (ITGAV:ITGB6), leading to release of the active TGF-beta-1. Interacts with NREP; the interaction results in a decrease in TGFB1 autoinduction. Interacts with HSP90AB1; inhibits latent TGFB1 activation. As to quaternary structure, homodimer; disulfide-linked. Interacts with TGF-beta receptors (TGFBR1 and TGFBR2), leading to signal transduction. In terms of processing, transforming growth factor beta-1 proprotein: The precursor proprotein is cleaved in the Golgi apparatus by FURIN to form Transforming growth factor beta-1 (TGF-beta-1) and Latency-associated peptide (LAP) chains, which remain non-covalently linked, rendering TGF-beta-1 inactive. Post-translationally, N-glycosylated. Deglycosylation leads to activation of Transforming growth factor beta-1 (TGF-beta-1); mechanisms triggering deglycosylation-driven activation of TGF-beta-1 are however unclear.

It localises to the secreted. It is found in the extracellular space. The protein localises to the extracellular matrix. In terms of biological role, transforming growth factor beta-1 proprotein: Precursor of the Latency-associated peptide (LAP) and Transforming growth factor beta-1 (TGF-beta-1) chains, which constitute the regulatory and active subunit of TGF-beta-1, respectively. Its function is as follows. Required to maintain the Transforming growth factor beta-1 (TGF-beta-1) chain in a latent state during storage in extracellular matrix. Associates non-covalently with TGF-beta-1 and regulates its activation via interaction with 'milieu molecules', such as LTBP1, LRRC32/GARP and LRRC33/NRROS, that control activation of TGF-beta-1. Interaction with LRRC33/NRROS regulates activation of TGF-beta-1 in macrophages and microglia. Interaction with LRRC32/GARP controls activation of TGF-beta-1 on the surface of activated regulatory T-cells (Tregs). Interaction with integrins (ITGAV:ITGB6 or ITGAV:ITGB8) results in distortion of the Latency-associated peptide chain and subsequent release of the active TGF-beta-1. Functionally, multifunctional protein that regulates the growth and differentiation of various cell types and is involved in various processes, such as normal development, immune function, microglia function and responses to neurodegeneration. Activation into mature form follows different steps: following cleavage of the proprotein in the Golgi apparatus, Latency-associated peptide (LAP) and Transforming growth factor beta-1 (TGF-beta-1) chains remain non-covalently linked rendering TGF-beta-1 inactive during storage in extracellular matrix. At the same time, LAP chain interacts with 'milieu molecules', such as LTBP1, LRRC32/GARP and LRRC33/NRROS that control activation of TGF-beta-1 and maintain it in a latent state during storage in extracellular milieus. TGF-beta-1 is released from LAP by integrins (ITGAV:ITGB6 or ITGAV:ITGB8): integrin-binding to LAP stabilizes an alternative conformation of the LAP bowtie tail and results in distortion of the LAP chain and subsequent release of the active TGF-beta-1. Once activated following release of LAP, TGF-beta-1 acts by binding to TGF-beta receptors (TGFBR1 and TGFBR2), which transduce signal. While expressed by many cells types, TGF-beta-1 only has a very localized range of action within cell environment thanks to fine regulation of its activation by Latency-associated peptide chain (LAP) and 'milieu molecules'. Plays an important role in bone remodeling: acts as a potent stimulator of osteoblastic bone formation, causing chemotaxis, proliferation and differentiation in committed osteoblasts. Can promote either T-helper 17 cells (Th17) or regulatory T-cells (Treg) lineage differentiation in a concentration-dependent manner. At high concentrations, leads to FOXP3-mediated suppression of RORC and down-regulation of IL-17 expression, favoring Treg cell development. At low concentrations in concert with IL-6 and IL-21, leads to expression of the IL-17 and IL-23 receptors, favoring differentiation to Th17 cells. Stimulates sustained production of collagen through the activation of CREB3L1 by regulated intramembrane proteolysis (RIP). Mediates SMAD2/3 activation by inducing its phosphorylation and subsequent translocation to the nucleus. Positively regulates odontoblastic differentiation in dental papilla cells, via promotion of IPO7-mediated translocation of phosphorylated SMAD2 to the nucleus and subsequent transcription of target genes. Can induce epithelial-to-mesenchymal transition (EMT) and cell migration in various cell types. The protein is Transforming growth factor beta-1 proprotein (TGFB1) of Canis lupus familiaris (Dog).